The sequence spans 323 residues: Deaminated glutathione amidase (323 aa).

A mitochondrion-targeting transit peptide spans 1 to 33 (MLGFITRPPHQLLCTGYRLLRTPVLCTQPRPRT). Positions 42-294 (LPLVAVCQVT…PGLCLARIDL (253 aa)) constitute a CN hydrolase domain. The active-site Proton acceptor is glutamate 82. Lysine 157 serves as the catalytic Proton donor. Residue cysteine 199 is the Nucleophile of the active site.

It belongs to the carbon-nitrogen hydrolase superfamily. NIT1/NIT2 family. In terms of tissue distribution, expressed in most tissues with higher expression in adult liver and kidney as well as in fetal adrenal gland and skeletal muscle.

It localises to the mitochondrion. Its subcellular location is the cytoplasm. The catalysed reaction is N-(4-oxoglutaryl)-L-cysteinylglycine + H2O = L-cysteinylglycine + 2-oxoglutarate. It carries out the reaction N-(4-carboxy-4-oxobutanoyl)-L-ethylglycylglycine + H2O = N-(2-aminobutanoyl)glycine + 2-oxoglutarate. In terms of biological role, catalyzes the hydrolysis of the amide bond in N-(4-oxoglutarate)-L-cysteinylglycine (deaminated glutathione), a metabolite repair reaction to dispose of the harmful deaminated glutathione. Possesses amidase activity toward deaminated ophthalmate in vitro. Plays a role in cell growth and apoptosis: loss of expression promotes cell growth, resistance to DNA damage stress and increased incidence to NMBA-induced tumors. Has tumor suppressor properties that enhances the apoptotic responsiveness in cancer cells; this effect is additive to the tumor suppressor activity of FHIT. It is also a negative regulator of primary T-cells. This is Deaminated glutathione amidase from Mus musculus (Mouse).